A 290-amino-acid polypeptide reads, in one-letter code: MDYKCFKGKHANIVIEIISLLEKGVKKAQEILEKPDAGSYTKLENSSGDTPIKADLALDKFLEENFLSLENIKSVFSEEKETPVTKENGSYLIAYDPLDGSSVMEANFLVGTIIGIYEKDYKAQNLAASLYVVFGHKIELVVALEEVYRYSFYQNKFHFIETIVLENKGKIVASGGNQKDFSLGLKKALEGFFAENYRLRYSGSMVADVHHVLVKKGGMFSYPQKKLRKLFEVFPLALMVEKAKGEAFYFDKGVKKRLLEQSVENYHEKSECYLASQHEAHILEKYLKGE.

The Mg(2+) site is built by Glu78, Asp96, Leu98, and Asp99. Residues Asp99–Ser102, Tyr201, and Lys226 each bind substrate. Glu232 serves as a coordination point for Mg(2+).

This sequence belongs to the FBPase class 1 family. Homotetramer. Requires Mg(2+) as cofactor.

The protein resides in the cytoplasm. The catalysed reaction is beta-D-fructose 1,6-bisphosphate + H2O = beta-D-fructose 6-phosphate + phosphate. It functions in the pathway carbohydrate biosynthesis; gluconeogenesis. The sequence is that of Fructose-1,6-bisphosphatase class 1 from Helicobacter pylori (strain ATCC 700392 / 26695) (Campylobacter pylori).